Reading from the N-terminus, the 448-residue chain is Trigger factor (448 aa).

The 87-residue stretch at 167-253 folds into the PPIase FKBP-type domain; that stretch reads GSIVRVDFVE…VKDIKRRDIP (87 aa).

This sequence belongs to the FKBP-type PPIase family. Tig subfamily.

The protein localises to the cytoplasm. The catalysed reaction is [protein]-peptidylproline (omega=180) = [protein]-peptidylproline (omega=0). Functionally, involved in protein export. Acts as a chaperone by maintaining the newly synthesized protein in an open conformation. Functions as a peptidyl-prolyl cis-trans isomerase. In Borrelia recurrentis (strain A1), this protein is Trigger factor.